We begin with the raw amino-acid sequence, 38 residues long: Large ribosomal subunit protein bL36 (38 aa).

Belongs to the bacterial ribosomal protein bL36 family.

This is Large ribosomal subunit protein bL36 from Psychrobacter cryohalolentis (strain ATCC BAA-1226 / DSM 17306 / VKM B-2378 / K5).